Here is a 366-residue protein sequence, read N- to C-terminus: Ribosomal RNA large subunit methyltransferase M (366 aa).

S-adenosyl-L-methionine is bound by residues serine 188, 221-224, aspartate 240, aspartate 260, and aspartate 277; that span reads CPGG. Residue lysine 306 is the Proton acceptor of the active site.

The protein belongs to the class I-like SAM-binding methyltransferase superfamily. RNA methyltransferase RlmE family. RlmM subfamily. Monomer.

The protein resides in the cytoplasm. The enzyme catalyses cytidine(2498) in 23S rRNA + S-adenosyl-L-methionine = 2'-O-methylcytidine(2498) in 23S rRNA + S-adenosyl-L-homocysteine + H(+). In terms of biological role, catalyzes the 2'-O-methylation at nucleotide C2498 in 23S rRNA. This is Ribosomal RNA large subunit methyltransferase M from Erwinia tasmaniensis (strain DSM 17950 / CFBP 7177 / CIP 109463 / NCPPB 4357 / Et1/99).